A 394-amino-acid polypeptide reads, in one-letter code: 1-deoxy-D-xylulose 5-phosphate reductoisomerase (394 aa).

Residues Thr12, Gly13, Ser14, Ile15, Lys39, Gln40, and Asn126 each coordinate NADPH. Lys127 lines the 1-deoxy-D-xylulose 5-phosphate pocket. Glu128 provides a ligand contact to NADPH. Residue Asp152 participates in Mn(2+) binding. 4 residues coordinate 1-deoxy-D-xylulose 5-phosphate: Ser153, Glu154, Ser183, and His206. Glu154 provides a ligand contact to Mn(2+). Residue Gly212 coordinates NADPH. Residues Ser219, Asn224, Lys225, and Glu228 each contribute to the 1-deoxy-D-xylulose 5-phosphate site. Glu228 serves as a coordination point for Mn(2+).

The protein belongs to the DXR family. Requires Mg(2+) as cofactor. The cofactor is Mn(2+).

The catalysed reaction is 2-C-methyl-D-erythritol 4-phosphate + NADP(+) = 1-deoxy-D-xylulose 5-phosphate + NADPH + H(+). Its pathway is isoprenoid biosynthesis; isopentenyl diphosphate biosynthesis via DXP pathway; isopentenyl diphosphate from 1-deoxy-D-xylulose 5-phosphate: step 1/6. Functionally, catalyzes the NADPH-dependent rearrangement and reduction of 1-deoxy-D-xylulose-5-phosphate (DXP) to 2-C-methyl-D-erythritol 4-phosphate (MEP). This chain is 1-deoxy-D-xylulose 5-phosphate reductoisomerase, found in Neisseria meningitidis serogroup A / serotype 4A (strain DSM 15465 / Z2491).